The sequence spans 177 residues: Large ribosomal subunit protein uL6 (177 aa).

The protein belongs to the universal ribosomal protein uL6 family. In terms of assembly, part of the 50S ribosomal subunit.

This protein binds to the 23S rRNA, and is important in its secondary structure. It is located near the subunit interface in the base of the L7/L12 stalk, and near the tRNA binding site of the peptidyltransferase center. This is Large ribosomal subunit protein uL6 from Vibrio atlanticus (strain LGP32) (Vibrio splendidus (strain Mel32)).